Reading from the N-terminus, the 493-residue chain is MRDLLSKKSHRQLELLELLFEHKRWFHRSELAELLNCTERAVKDDLSHVKSAFPDLIFHSSTNGIRIINTDDSDIEMVYHHFFKHSTHFSILEFIFFNEGCQAESICKEFYISSSSLYRIISQINKVIKRQFQFEVSLTPVQIIGNERDIRYFFAQYFSEKYYFLEWPFENFSSEPLSQLLELVYKETSFPMNLSTHRMLKLLLVTNLYRIKFGHFMEVDKDSFNDQSLDFLMQAEGIEGVAQSFESEYNISLDEEVVCQLFVSYFQKMFFIDESLFMKCVKKDSYVEKSYHLLSDFIDQISVKYQIEMENKDNLIWHLHNTAHLYRQELFTEFILFDQKGNTIRNFQNIFPKFVSDIKKELSHYLETLEVCSSSMMVNHLSYTFITHTKHLVINLLQNQPKLKVLVMSNFDQYHAKFVAETLSYYCSNNFELEVWTELELSKESLEDSPYDIIISNFIIPPIENKRLIYSNNINTVSLIYLLNAMMFIRLDE.

This sequence belongs to the AtxA/AcpA family.

This chain is Putative trans-acting regulator SP_1800, found in Streptococcus pneumoniae serotype 4 (strain ATCC BAA-334 / TIGR4).